Consider the following 1089-residue polypeptide: SUMO-specific isopeptidase USPL1 (1089 aa).

Positions 90–128 (LISPDSEDCPTPSKPQKRKRLETNCRNSPLPVHSKKTRS) are disordered. Positions 215–488 (VQWKNTQALC…ETHIVIWERK (274 aa)) constitute a USP domain. The active-site Nucleophile is cysteine 224. The tract at residues 224–483 (CWLDCILSAL…EVPASETHIV (260 aa)) is SUMO-binding. The active-site Proton acceptor is histidine 444. 4 disordered regions span residues 687–739 (DSQT…KEDQ), 791–817 (ISRR…SPPL), 835–868 (LREQ…AAED), and 891–928 (LISS…CGSP). Residues 719–733 (TASSKTVAARSAQNQ) show a composition bias toward polar residues. Residues 791 to 803 (ISRRSKRMSRKAK) show a composition bias toward basic residues. Serine 894 is modified (phosphoserine). The segment covering 895–907 (PHREPSLSDHSEP) has biased composition (basic and acidic residues).

This sequence belongs to the peptidase C19 family. In terms of assembly, interacts with ELL.

The protein resides in the nucleus. It is found in the cajal body. Functionally, SUMO-specific isopeptidase involved in protein desumoylation. Specifically binds SUMO proteins with a higher affinity for SUMO2 and SUMO3 which it cleaves more efficiently. Also able to process full-length SUMO proteins to their mature forms. Plays a key role in RNA polymerase-II-mediated snRNA transcription in the Cajal bodies. Is a component of complexes that can bind to U snRNA genes. This is SUMO-specific isopeptidase USPL1 (Uspl1) from Mus musculus (Mouse).